A 227-amino-acid polypeptide reads, in one-letter code: Isopentenyl-diphosphate Delta-isomerase 1 (227 aa).

Lys-36 is a substrate binding site. 2 residues coordinate Mg(2+): His-40 and His-51. One can recognise a Nudix hydrolase domain in the interval 49–199 (LLHRAFSVFL…EIKITPWFKI (151 aa)). Residues Arg-70 and Lys-74 each contribute to the substrate site. Cys-86 is a catalytic residue. Position 87 (Ser-87) interacts with substrate. Residues Glu-146 and Glu-148 each contribute to the Mg(2+) site. Residue Glu-148 is part of the active site. Position 176 is an N6-acetyllysine (Lys-176). Residues 225–227 (YRM) carry the Microbody targeting signal motif.

It belongs to the IPP isomerase type 1 family. In terms of assembly, monomer. It depends on Mg(2+) as a cofactor.

It is found in the peroxisome. It catalyses the reaction isopentenyl diphosphate = dimethylallyl diphosphate. Its pathway is isoprenoid biosynthesis; dimethylallyl diphosphate biosynthesis; dimethylallyl diphosphate from isopentenyl diphosphate: step 1/1. Its function is as follows. Catalyzes the 1,3-allylic rearrangement of the homoallylic substrate isopentenyl (IPP) to its highly electrophilic allylic isomer, dimethylallyl diphosphate (DMAPP). This Homo sapiens (Human) protein is Isopentenyl-diphosphate Delta-isomerase 1 (IDI1).